The sequence spans 385 residues: Cell division protein FtsZ (385 aa).

GTP contacts are provided by residues 37-41, 125-127, Glu156, Lys160, and Asp204; these read GGGSN and GTG.

The protein belongs to the FtsZ family. Homodimer. Polymerizes to form a dynamic ring structure in a strictly GTP-dependent manner. Interacts directly with several other division proteins.

The protein localises to the cytoplasm. Essential cell division protein that forms a contractile ring structure (Z ring) at the future cell division site. The regulation of the ring assembly controls the timing and the location of cell division. One of the functions of the FtsZ ring is to recruit other cell division proteins to the septum to produce a new cell wall between the dividing cells. Binds GTP and shows GTPase activity. The sequence is that of Cell division protein FtsZ from Helicobacter pylori (strain ATCC 700392 / 26695) (Campylobacter pylori).